Consider the following 74-residue polypeptide: Sec-independent protein translocase protein TatA (74 aa).

The helical transmembrane segment at 1 to 21 threads the bilayer; the sequence is MGGISIWNLVIIVLLVVLLFG. The disordered stretch occupies residues 51 to 74; the sequence is AEFEKVEQKTAESTEQKAKEKEQA.

This sequence belongs to the TatA/E family. The Tat system comprises two distinct complexes: a TatABC complex, containing multiple copies of TatA, TatB and TatC subunits, and a separate TatA complex, containing only TatA subunits. Substrates initially bind to the TatABC complex, which probably triggers association of the separate TatA complex to form the active translocon.

It is found in the cell inner membrane. Functionally, part of the twin-arginine translocation (Tat) system that transports large folded proteins containing a characteristic twin-arginine motif in their signal peptide across membranes. TatA could form the protein-conducting channel of the Tat system. The chain is Sec-independent protein translocase protein TatA from Glaesserella parasuis serovar 5 (strain SH0165) (Haemophilus parasuis).